The chain runs to 292 residues: GID complex substrate-recognition subunit 10 (292 aa).

The protein belongs to the GID4/VID24 family. As to quaternary structure, substrate-recognition component of the GID/CTLH ubiquitin ligase complex. In the absence of stress, the complex exists as an inactive anticipatory complex (GID(Ant)), composed of VID30/GID1, the E3 ubiquitin-ligase RMD5/GID2, VID28/GID5, GID8, and the RING-like subunit FYV10/GID9, awaiting a substrate receptor to form the active E3 ligase complex. When cells are shifted to glucose-containing medium, the substrate receptor VID24/GID4 is induced and becomes part of the complex, named GID(SR4). Under osmotic or heat stress, the substrate receptor GID10 is induced and becomes part of the complex, named GID(SR10). Interacts with proteins that have an N-terminal Pro/N-degron, including ART2.

Substrate-recognition component of the GID E3 ligase complex recruiting N termini and catalyzing ubiquitination of proteins targeted for degradation. GID E3 is regulated through assembly with interchangeable N-degron-binding substrate receptors induced by distinct environmental perturbations. Required for the adaptation to osmotic or heat stress. Required for the regulation of protein levels of the adapter protein ART2, a component of the ART-Rsp5 ubiquitin ligase pathway, part of the plasma membrane quality control. Specific for substrates with an N-terminal Pro (Pro/N-degron), including ART2. Has high affinity for the N-terminal sequence Pro-Tyr-Ile-Thr, and also recognizes nonproline residues such as Met-Tyr-Ile-Thr-Val or Val-Cys-Phe-His. The protein is GID complex substrate-recognition subunit 10 of Saccharomyces cerevisiae (strain ATCC 204508 / S288c) (Baker's yeast).